The sequence spans 85 residues: Protein U62 (85 aa).

The protein belongs to the herpesviridae UL91 family.

This chain is Protein U62 (U62), found in Homo sapiens (Human).